The following is a 281-amino-acid chain: Pantothenate synthetase (281 aa).

30 to 37 provides a ligand contact to ATP; it reads MGYLHEGH. Catalysis depends on histidine 37, which acts as the Proton donor. Position 61 (glutamine 61) interacts with (R)-pantoate. Glutamine 61 is a beta-alanine binding site. ATP is bound at residue 147 to 150; that stretch reads GEKD. Glutamine 153 contributes to the (R)-pantoate binding site. ATP contacts are provided by residues isoleucine 176 and 184–187; that span reads KSSR.

This sequence belongs to the pantothenate synthetase family. In terms of assembly, homodimer.

It localises to the cytoplasm. It carries out the reaction (R)-pantoate + beta-alanine + ATP = (R)-pantothenate + AMP + diphosphate + H(+). The protein operates within cofactor biosynthesis; (R)-pantothenate biosynthesis; (R)-pantothenate from (R)-pantoate and beta-alanine: step 1/1. Functionally, catalyzes the condensation of pantoate with beta-alanine in an ATP-dependent reaction via a pantoyl-adenylate intermediate. This is Pantothenate synthetase from Clostridium botulinum (strain Kyoto / Type A2).